Reading from the N-terminus, the 261-residue chain is Type III pantothenate kinase (261 aa).

D6–V13 contacts ATP. Substrate is bound at residue G108 to R111. D110 serves as the catalytic Proton acceptor. D130 provides a ligand contact to K(+). ATP is bound at residue T133. T185 serves as a coordination point for substrate.

It belongs to the type III pantothenate kinase family. Homodimer. Requires NH4(+) as cofactor. K(+) serves as cofactor.

Its subcellular location is the cytoplasm. The enzyme catalyses (R)-pantothenate + ATP = (R)-4'-phosphopantothenate + ADP + H(+). It functions in the pathway cofactor biosynthesis; coenzyme A biosynthesis; CoA from (R)-pantothenate: step 1/5. Its function is as follows. Catalyzes the phosphorylation of pantothenate (Pan), the first step in CoA biosynthesis. This is Type III pantothenate kinase from Rhodospirillum centenum (strain ATCC 51521 / SW).